The sequence spans 86 residues: Putative sodium channel toxin Ts17 (86 aa).

Residues 1-19 (MNYFIFLVVACLLTAGTEG) form the signal peptide. The LCN-type CS-alpha/beta domain maps to 21 to 82 (KDGYPVEGDN…EPTKTSGRCK (62 aa)). 4 disulfides stabilise this stretch: C31/C81, C35/C57, C43/C64, and C47/C66. P83 carries the proline amide modification.

It belongs to the long (4 C-C) scorpion toxin superfamily. Sodium channel inhibitor family. Alpha subfamily. As to expression, expressed by the venom gland.

The protein localises to the secreted. Alpha toxins bind voltage-independently at site-3 of sodium channels (Nav) and inhibit the inactivation of the activated channels, thereby blocking neuronal transmission. This chain is Putative sodium channel toxin Ts17, found in Tityus serrulatus (Brazilian scorpion).